A 442-amino-acid polypeptide reads, in one-letter code: MTPPENRPSLPEVHRSIRVPNSNSFWRKMLAYAGPGYLVSVGYIDPGNWATDIAGGSKFGYTLLTVILLSNLMAILLQSLCVRLGVATGRDLAQACRDYFSPKVSFCLWVLCEIAIAACDLAELLGSAIALQLLFVIPLIWGVCITALDVLVLLFLQHKGFRYTEALVIMLVATVGICFTAEILFSRPDMGGILLGYLPKKEILQNPEMLYIAIGILGATVMPHNLYLHSSIVQTRDWQPTTEKRWEAIKFGTIDSTFALSLALFINSAILIVSAATFHFSGNQNVAEIQDAYKLLSPLLGVSAASAIFGIALLASGQSSTLTATLAGQIVMEGFLQFRLPSWLRRLITRLLAIIPALITIILFGENSTSSLIVLSQVILSLQLPFAVIPLVMFTSNRRLMGEFVNPLWLKSLAWLVAIVIVGLNAWLLLQSLWGWLLQVPS.

The next 11 helical transmembrane spans lie at 29 to 49, 62 to 82, 106 to 126, 135 to 155, 166 to 186, 209 to 229, 258 to 278, 295 to 315, 347 to 367, 372 to 392, and 413 to 433; these read MLAYAGPGYLVSVGYIDPGNW, TLLTVILLSNLMAILLQSLCV, FCLWVLCEIAIAACDLAELLG, FVIPLIWGVCITALDVLVLLF, ALVIMLVATVGICFTAEILFS, MLYIAIGILGATVMPHNLYLH, FALSLALFINSAILIVSAATF, LLSPLLGVSAASAIFGIALLA, LITRLLAIIPALITIILFGEN, LIVLSQVILSLQLPFAVIPLV, and LAWLVAIVIVGLNAWLLLQSL.

Belongs to the NRAMP family.

The protein localises to the cell inner membrane. Functionally, h(+)-stimulated, divalent metal cation uptake system. In Nostoc sp. (strain PCC 7120 / SAG 25.82 / UTEX 2576), this protein is Divalent metal cation transporter MntH.